A 272-amino-acid chain; its full sequence is Zinc transporter ZupT (272 aa).

A run of 8 helical transmembrane segments spans residues 12 to 32 (ALAV…MVVF), 40 to 60 (LLAF…LSEI), 76 to 96 (LGFT…MVID), 126 to 146 (LLTA…TFFA), 158 to 178 (AFAI…PVYF), 187 to 207 (FGAS…GYLL), 211 to 231 (VLSE…MVFL), and 247 to 267 (HETV…LVLF). Fe(2+) contacts are provided by Asn-136 and Glu-139. Residues Glu-139 and His-164 each contribute to the Zn(2+) site. Fe(2+) contacts are provided by Asn-165, Glu-168, and Glu-197. Glu-168 is a Zn(2+) binding site.

Belongs to the ZIP transporter (TC 2.A.5) family. ZupT subfamily.

The protein localises to the cell inner membrane. It catalyses the reaction Zn(2+)(in) = Zn(2+)(out). Functionally, mediates zinc uptake. May also transport other divalent cations. The sequence is that of Zinc transporter ZupT from Xanthomonas campestris pv. campestris (strain ATCC 33913 / DSM 3586 / NCPPB 528 / LMG 568 / P 25).